We begin with the raw amino-acid sequence, 341 residues long: L-threonine 3-dehydrogenase (341 aa).

Cys38 contributes to the Zn(2+) binding site. Active-site charge relay system residues include Thr40 and His43. Zn(2+) contacts are provided by His63, Glu64, Cys93, Cys96, Cys99, and Cys107. NAD(+)-binding positions include Ile175, Asp195, Arg200, 262–264 (LGI), and 286–287 (IY).

The protein belongs to the zinc-containing alcohol dehydrogenase family. In terms of assembly, homotetramer. Requires Zn(2+) as cofactor.

The protein resides in the cytoplasm. The enzyme catalyses L-threonine + NAD(+) = (2S)-2-amino-3-oxobutanoate + NADH + H(+). Its pathway is amino-acid degradation; L-threonine degradation via oxydo-reductase pathway; glycine from L-threonine: step 1/2. Its function is as follows. Catalyzes the NAD(+)-dependent oxidation of L-threonine to 2-amino-3-ketobutyrate. The sequence is that of L-threonine 3-dehydrogenase from Yersinia enterocolitica serotype O:8 / biotype 1B (strain NCTC 13174 / 8081).